The primary structure comprises 499 residues: Probable mitochondrial-processing peptidase subunit alpha-2, chloroplastic/mitochondrial (499 aa).

This sequence belongs to the peptidase M16 family. In terms of assembly, heterodimer of alpha and beta subunits, forming the mitochondrial processing protease (MPP) in which subunit alpha is involved in substrate recognition and binding and subunit beta is the catalytic subunit. Component of the ubiquinol-cytochrome c oxidoreductase (cytochrome b-c1 complex, complex III, CIII), a multisubunit enzyme composed of 10 subunits. The complex is composed of 3 respiratory subunits cytochrome b (MT-CYB), cytochrome c1 (CYC1-1 or CYC1-2) and Rieske protein (UCR1-1 or UCR1-2), 2 core protein subunits MPPalpha1 (or MPPalpha2) and MPPB, and 5 low-molecular weight protein subunits QCR7-1 (or QCR7-2), UCRQ-1 (or UCRQ-2), QCR9, UCRY and probably QCR6-1 (or QCR6-2). The complex exists as an obligatory dimer and forms supercomplexes (SCs) in the inner mitochondrial membrane with NADH-ubiquinone oxidoreductase (complex I, CI), resulting in different assemblies (supercomplexes SCI(1)III(2) and SCI(2)III(4)). Interacts with TIM23-2.

Its subcellular location is the plastid. It localises to the chloroplast stroma. The protein localises to the mitochondrion matrix. The protein resides in the mitochondrion inner membrane. Its function is as follows. Substrate recognition and binding subunit of the essential mitochondrial processing protease (MPP), which cleaves the mitochondrial sequence off newly imported precursors proteins. In terms of biological role, component of the ubiquinol-cytochrome c oxidoreductase, a multisubunit transmembrane complex that is part of the mitochondrial electron transport chain which drives oxidative phosphorylation. The respiratory chain contains 3 multisubunit complexes succinate dehydrogenase (complex II, CII), ubiquinol-cytochrome c oxidoreductase (cytochrome b-c1 complex, complex III, CIII) and cytochrome c oxidase (complex IV, CIV), that cooperate to transfer electrons derived from NADH and succinate to molecular oxygen, creating an electrochemical gradient over the inner membrane that drives transmembrane transport and the ATP synthase. The cytochrome b-c1 complex catalyzes electron transfer from ubiquinol to cytochrome c, linking this redox reaction to translocation of protons across the mitochondrial inner membrane, with protons being carried across the membrane as hydrogens on the quinol. In the process called Q cycle, 2 protons are consumed from the matrix, 4 protons are released into the intermembrane space and 2 electrons are passed to cytochrome c. The protein is Probable mitochondrial-processing peptidase subunit alpha-2, chloroplastic/mitochondrial (MPPalpha2) of Arabidopsis thaliana (Mouse-ear cress).